We begin with the raw amino-acid sequence, 515 residues long: Lysine--tRNA ligase (515 aa).

Mg(2+) contacts are provided by glutamate 425 and glutamate 432.

It belongs to the class-II aminoacyl-tRNA synthetase family. As to quaternary structure, homodimer. It depends on Mg(2+) as a cofactor.

It localises to the cytoplasm. The enzyme catalyses tRNA(Lys) + L-lysine + ATP = L-lysyl-tRNA(Lys) + AMP + diphosphate. The chain is Lysine--tRNA ligase from Cupriavidus metallidurans (strain ATCC 43123 / DSM 2839 / NBRC 102507 / CH34) (Ralstonia metallidurans).